A 582-amino-acid polypeptide reads, in one-letter code: Sodium-dependent low-affinity dicarboxylate transporter 1 (582 aa).

The next 12 helical transmembrane spans lie at 17 to 37 (SFVI…VGDS), 59 to 79 (ALPL…FGIM), 87 to 107 (AYLP…LAVE), 130 to 150 (VMAG…NTAT), 224 to 244 (LMLS…TGTA), 271 to 291 (IFAF…LYLL), 317 to 337 (FSFA…LWIL), 353 to 373 (EFVS…TLPE), 401 to 421 (FPWS…GVKE), 455 to 475 (TNVC…AELA), 482 to 502 (PLNF…LPVA), and 527 to 547 (VTLG…GFVF).

This sequence belongs to the SLC13A/DASS transporter (TC 2.A.47) family. NADC subfamily. Nad-1 and nad-2 are coexpressed in the intestinal tract from early larvae to adults, expression is from the pharynx through to the anus. Expression level is significantly greater in the anterior half of the intestine than in the posterior half.

It is found in the membrane. Its function is as follows. Low affinity sodium-dicarboxylate cotransporter that accepts a range of tricarboxylic acid-cycle intermediates with 4-5 carbon atoms. There is no interaction with monocarboxylates. In Caenorhabditis elegans, this protein is Sodium-dependent low-affinity dicarboxylate transporter 1 (nac-1).